Here is a 602-residue protein sequence, read N- to C-terminus: Elongation factor 4 (602 aa).

A tr-type G domain is found at 7–189; the sequence is KHIRNFSIVA…AIVDKIPSPQ (183 aa). GTP-binding positions include 19–24 and 136–139; these read DHGKST and NKID.

This sequence belongs to the TRAFAC class translation factor GTPase superfamily. Classic translation factor GTPase family. LepA subfamily.

Its subcellular location is the cell membrane. The catalysed reaction is GTP + H2O = GDP + phosphate + H(+). Its function is as follows. Required for accurate and efficient protein synthesis under certain stress conditions. May act as a fidelity factor of the translation reaction, by catalyzing a one-codon backward translocation of tRNAs on improperly translocated ribosomes. Back-translocation proceeds from a post-translocation (POST) complex to a pre-translocation (PRE) complex, thus giving elongation factor G a second chance to translocate the tRNAs correctly. Binds to ribosomes in a GTP-dependent manner. This chain is Elongation factor 4, found in Clostridium kluyveri (strain ATCC 8527 / DSM 555 / NBRC 12016 / NCIMB 10680 / K1).